The sequence spans 247 residues: MADS-box transcription factor 1 (247 aa).

Positions Met1–Ser61 constitute an MADS-box domain. One can recognise a K-box domain in the interval Glu91–Asn181.

Expressed abundantly in the seed coat and to lesser extent in young buds, carpels, petals, and stamen.

It is found in the nucleus. Functionally, probable transcription factor. The sequence is that of MADS-box transcription factor 1 from Pisum sativum (Garden pea).